Reading from the N-terminus, the 276-residue chain is 2-dehydro-3-deoxyphosphooctonate aldolase (276 aa).

This sequence belongs to the KdsA family.

Its subcellular location is the cytoplasm. The enzyme catalyses D-arabinose 5-phosphate + phosphoenolpyruvate + H2O = 3-deoxy-alpha-D-manno-2-octulosonate-8-phosphate + phosphate. It functions in the pathway carbohydrate biosynthesis; 3-deoxy-D-manno-octulosonate biosynthesis; 3-deoxy-D-manno-octulosonate from D-ribulose 5-phosphate: step 2/3. It participates in bacterial outer membrane biogenesis; lipopolysaccharide biosynthesis. This is 2-dehydro-3-deoxyphosphooctonate aldolase from Xanthomonas campestris pv. campestris (strain 8004).